A 245-amino-acid polypeptide reads, in one-letter code: Thiopurine S-methyltransferase (245 aa).

29–40 lines the S-adenosyl-L-methionine pocket; it reads WQEKWVSRRIGF. Position 40 (Phe-40) interacts with substrate. Lys-58 is modified (N6-acetyllysine). The S-adenosyl-L-methionine site is built by Leu-69, Glu-90, and Arg-152.

It belongs to the class I-like SAM-binding methyltransferase superfamily. TPMT family. Monomer.

The protein localises to the cytoplasm. The enzyme catalyses S-adenosyl-L-methionine + a thiopurine = S-adenosyl-L-homocysteine + a thiopurine S-methylether.. The sequence is that of Thiopurine S-methyltransferase (TPMT) from Canis lupus familiaris (Dog).